The primary structure comprises 531 residues: Coiled-coil domain-containing protein 9 (531 aa).

Positions 40-531 are disordered; that stretch reads EDRKKAELEG…PGEAWPFESV (492 aa). A compositionally biased stretch (basic and acidic residues) spans 59 to 72; that stretch reads RSVEKENVAVESEK. At Ser-80 the chain carries Phosphoserine. A Phosphothreonine modification is found at Thr-95. The residue at position 107 (Arg-107) is an Omega-N-methylarginine. Ser-111 bears the Phosphoserine mark. 3 positions are modified to omega-N-methylarginine: Arg-121, Arg-128, and Arg-130. 3 positions are modified to asymmetric dimethylarginine: Arg-131, Arg-133, and Arg-135. A Phosphoserine modification is found at Ser-137. Basic and acidic residues-rich tracts occupy residues 148-185, 194-217, and 227-241; these read ISDR…REGV, FLDD…EESR, and DFER…ERQG. The stretch at 149-185 forms a coiled coil; it reads SDRKSKEWEERRRQNIEKMNEEMEKIAEYERNQREGV. Ser-202 carries the post-translational modification Phosphoserine. A phosphoserine mark is found at Ser-248 and Ser-255. Composition is skewed to basic and acidic residues over residues 258 to 279, 289 to 302, 311 to 320, and 361 to 372; these read GRER…QERL, WRRE…DGMF, EPSHRYDDQA, and YSDHDDRWETKE. Ser-376, Ser-386, and Ser-390 each carry phosphoserine. Over residues 386–395 the composition is skewed to low complexity; that stretch reads SPETSPKETP. Pro residues predominate over residues 396 to 406; that stretch reads MQPPEIPAPAH. Positions 411–446 are enriched in acidic residues; it reads DEGEENEGEEDEEWEDISEDEEEEEIEVEEGDEEEP. Ser-521 is modified (phosphoserine).

As to quaternary structure, probable component of the exon junction complex (EJC); the association is RNA-dependent.

Probable component of the exon junction complex (EJC), a multiprotein complex that associates immediately upstream of the exon-exon junction on mRNAs and serves as a positional landmark for the intron exon structure of genes and directs post-transcriptional processes in the cytoplasm such as mRNA export, nonsense-mediated mRNA decay (NMD) or translation. The protein is Coiled-coil domain-containing protein 9 of Homo sapiens (Human).